A 29-amino-acid polypeptide reads, in one-letter code: Cytochrome b6-f complex subunit 8 (29 aa).

A helical membrane pass occupies residues 3 to 23; that stretch reads ITSIAWGALMVVFTFSLSLVV.

The protein belongs to the PetN family. In terms of assembly, the 4 large subunits of the cytochrome b6-f complex are cytochrome b6, subunit IV (17 kDa polypeptide, PetD), cytochrome f and the Rieske protein, while the 4 small subunits are PetG, PetL, PetM and PetN. The complex functions as a dimer.

The protein localises to the plastid membrane. Component of the cytochrome b6-f complex, which mediates electron transfer between photosystem II (PSII) and photosystem I (PSI), cyclic electron flow around PSI, and state transitions. This Aneura mirabilis (Parasitic liverwort) protein is Cytochrome b6-f complex subunit 8.